Consider the following 323-residue polypeptide: Acetyl-coenzyme A carboxylase carboxyl transferase subunit alpha (323 aa).

A CoA carboxyltransferase C-terminal domain is found at 35–296 (EVLSELDELR…GMTLKKCLDE (262 aa)).

The protein belongs to the AccA family. As to quaternary structure, acetyl-CoA carboxylase is a heterohexamer composed of biotin carboxyl carrier protein (AccB), biotin carboxylase (AccC) and two subunits each of ACCase subunit alpha (AccA) and ACCase subunit beta (AccD).

The protein resides in the cytoplasm. It carries out the reaction N(6)-carboxybiotinyl-L-lysyl-[protein] + acetyl-CoA = N(6)-biotinyl-L-lysyl-[protein] + malonyl-CoA. It functions in the pathway lipid metabolism; malonyl-CoA biosynthesis; malonyl-CoA from acetyl-CoA: step 1/1. Component of the acetyl coenzyme A carboxylase (ACC) complex. First, biotin carboxylase catalyzes the carboxylation of biotin on its carrier protein (BCCP) and then the CO(2) group is transferred by the carboxyltransferase to acetyl-CoA to form malonyl-CoA. The sequence is that of Acetyl-coenzyme A carboxylase carboxyl transferase subunit alpha from Aquifex aeolicus (strain VF5).